The chain runs to 119 residues: Small polypeptide DEVIL 24 (119 aa).

The interval 83–114 is required for DVL/RTFL small polypeptide activity; it reads SFTSKCTSLMKQQHARLCIIRLCATMLLRSYT. Residues 96 to 113 traverse the membrane as a helical segment; the sequence is HARLCIIRLCATMLLRSY.

This sequence belongs to the DVL/RTFL small polypeptides family.

The protein resides in the cell membrane. Its function is as follows. Small polypeptide acting as a regulatory molecule which coordinates cellular responses required for differentiation, growth and development, probably by restricting polar cell proliferation in lateral organs and coordinating socket cell recruitment and differentiation at trichome sites. This chain is Small polypeptide DEVIL 24, found in Arabidopsis thaliana (Mouse-ear cress).